We begin with the raw amino-acid sequence, 697 residues long: MCKSLRYCFSHCLYLAMTRLEEVNREVNMHSSVRYLGYLARFNLLVAICLGLYVRWEKTANSLILVIFILGLFVLGIASILYYYFSMEAASLSLSNLWFGFLLGLLCFLDNSSFKSDVKEETTKYLLLTSIVLRILCALVERLSGYVRHRPTLLTTVEFLELVGFAIASTTMLVERSLSVILLVMALAMLIIDLRMKSFLAIPNLIIFSVLLFFSSLETPQNPIAFACFFICLITDPFLDIYFSGLSVTERWKPFLYRGRICRRLSVVFTGMIELTFFTLSAFKLRDTHLWYFVIPGFSIFGIFWMICHIIFLLTLWGFHTKLNDCHKVYINHRADNNSLDRIMASKGMRHFCLISEQLVFFSLLATAILGAVSWQPTNGIFLSMFLIVLPLESMAHGLFHELGNCLGGTSVGYAIVIPTNFCSPDGQPTLLPPEHVQELNLRSTGMLNAIQRFFAYHMIETYGCDYSTSGLSFDTLHSKLKAFLELRTVDGPRHDTYVLYYSGHTHGSGEWALAGGDILRLDTLLEWWREKNGSFCSRLIIILDSENSTPWVKEVRKINDQYVAVQGAELAKTVDIEEADPPQLGDFTRDWVEYNCNSTNNICWTEKGRTVKAMYGVSKRWSDYTLHLPTGSDVAKHWMLHFPRITYPLVHLANWLCGLNLFWMCKACFRCLKRLKMSWFLPTVLDTGQGFKLVKS.

A run of 3 helical transmembrane segments spans residues L36–W56, L63–Y83, and A89–L109. N-linked (GlcNAc...) asparagine glycosylation occurs at N111. The next 5 helical transmembrane spans lie at M172 to I192, F199 to T219, P223 to F243, L265 to L285, and F293 to L313. N337 carries N-linked (GlcNAc...) asparagine glycosylation. Transmembrane regions (helical) follow at residues F352–A372 and G380–F400. N-linked (GlcNAc...) asparagine glycosylation is found at N533 and N598. The chain crosses the membrane as a helical span at residues I646–C666.

It belongs to the TMEM168 family.

It localises to the nucleus membrane. In terms of biological role, plays a key role in maintaining the cardiac electrical stability by modulating cell surface expression of SCN5A. May play a role i the modulation of anxiety behavior by regulating GABAergic neuronal system in the nucleus accumbens. The sequence is that of Transmembrane protein 168 (Tmem168) from Rattus norvegicus (Rat).